The chain runs to 794 residues: cAMP and cAMP-inhibited cGMP 3',5'-cyclic phosphodiesterase 10A (794 aa).

3',5'-cyclic AMP-binding positions include arginine 296–cysteine 297, isoleucine 340–alanine 341, threonine 374, glutamine 393, and histidine 525. Residues threonine 452–glutamate 769 enclose the PDEase domain. The active-site Proton donor is histidine 525. 3',5'-cyclic GMP is bound at residue histidine 525. Positions 529, 563, 564, and 674 each coordinate a divalent metal cation. A 3',5'-cyclic AMP-binding site is contributed by glutamine 726. 3',5'-cyclic GMP is bound at residue glutamine 726.

This sequence belongs to the cyclic nucleotide phosphodiesterase family. Homodimer. The cofactor is a divalent metal cation. In terms of tissue distribution, detected in striatum and testis (at protein level). Detected in whole brain, hippocampus, olfactory bulb, striatum neurons and testis.

The protein resides in the cytoplasm. Its subcellular location is the cytosol. The catalysed reaction is a nucleoside 3',5'-cyclic phosphate + H2O = a nucleoside 5'-phosphate + H(+). It carries out the reaction 3',5'-cyclic AMP + H2O = AMP + H(+). The enzyme catalyses 3',5'-cyclic GMP + H2O = GMP + H(+). Its pathway is purine metabolism; 3',5'-cyclic AMP degradation; AMP from 3',5'-cyclic AMP: step 1/1. It functions in the pathway purine metabolism; 3',5'-cyclic GMP degradation; GMP from 3',5'-cyclic GMP: step 1/1. Its activity is regulated as follows. Inhibited by dipyridamole and moderately by IBMX, zaprinast and rolipram. Plays a role in signal transduction by regulating the intracellular concentration of cyclic nucleotides. Can hydrolyze both cAMP and cGMP, but has higher affinity for cAMP and is more efficient with cAMP as substrate. This chain is cAMP and cAMP-inhibited cGMP 3',5'-cyclic phosphodiesterase 10A (Pde10a), found in Rattus norvegicus (Rat).